We begin with the raw amino-acid sequence, 453 residues long: Bifunctional protein GlmU (453 aa).

The interval 1 to 225 (MNIVILAAGT…EWETLGVNSK (225 aa)) is pyrophosphorylase. UDP-N-acetyl-alpha-D-glucosamine is bound by residues 6–9 (LAAG), lysine 20, glutamine 71, 76–77 (GT), 98–100 (YGD), glycine 135, glutamate 150, asparagine 165, and asparagine 223. Position 100 (aspartate 100) interacts with Mg(2+). Residue asparagine 223 coordinates Mg(2+). The tract at residues 226 to 246 (AQLAELERIHQRKLAEALLAD) is linker. Residues 247-453 (GVTLADPARI…GYVRPVKKKS (207 aa)) form an N-acetyltransferase region. Positions 329 and 347 each coordinate UDP-N-acetyl-alpha-D-glucosamine. The Proton acceptor role is filled by histidine 359. Residues tyrosine 362 and asparagine 373 each contribute to the UDP-N-acetyl-alpha-D-glucosamine site. Residues alanine 376, 382 to 383 (NY), serine 401, and alanine 419 each bind acetyl-CoA.

This sequence in the N-terminal section; belongs to the N-acetylglucosamine-1-phosphate uridyltransferase family. The protein in the C-terminal section; belongs to the transferase hexapeptide repeat family. Homotrimer. Mg(2+) serves as cofactor.

It localises to the cytoplasm. The catalysed reaction is alpha-D-glucosamine 1-phosphate + acetyl-CoA = N-acetyl-alpha-D-glucosamine 1-phosphate + CoA + H(+). It carries out the reaction N-acetyl-alpha-D-glucosamine 1-phosphate + UTP + H(+) = UDP-N-acetyl-alpha-D-glucosamine + diphosphate. The protein operates within nucleotide-sugar biosynthesis; UDP-N-acetyl-alpha-D-glucosamine biosynthesis; N-acetyl-alpha-D-glucosamine 1-phosphate from alpha-D-glucosamine 6-phosphate (route II): step 2/2. It participates in nucleotide-sugar biosynthesis; UDP-N-acetyl-alpha-D-glucosamine biosynthesis; UDP-N-acetyl-alpha-D-glucosamine from N-acetyl-alpha-D-glucosamine 1-phosphate: step 1/1. Its pathway is bacterial outer membrane biogenesis; LPS lipid A biosynthesis. Catalyzes the last two sequential reactions in the de novo biosynthetic pathway for UDP-N-acetylglucosamine (UDP-GlcNAc). The C-terminal domain catalyzes the transfer of acetyl group from acetyl coenzyme A to glucosamine-1-phosphate (GlcN-1-P) to produce N-acetylglucosamine-1-phosphate (GlcNAc-1-P), which is converted into UDP-GlcNAc by the transfer of uridine 5-monophosphate (from uridine 5-triphosphate), a reaction catalyzed by the N-terminal domain. This is Bifunctional protein GlmU from Burkholderia thailandensis (strain ATCC 700388 / DSM 13276 / CCUG 48851 / CIP 106301 / E264).